The primary structure comprises 183 residues: Ribulose bisphosphate carboxylase small subunit, chloroplastic (183 aa).

The transit peptide at 1–59 (MASSMISSGTVATVSADRPAPAQARMVAPFTGLKSSSASPVTRKSNDITSIASNGGRVQ) directs the protein to the chloroplast.

Belongs to the RuBisCO small chain family. Heterohexadecamer of 8 large and 8 small subunits.

The protein localises to the plastid. Its subcellular location is the chloroplast. RuBisCO catalyzes two reactions: the carboxylation of D-ribulose 1,5-bisphosphate, the primary event in carbon dioxide fixation, as well as the oxidative fragmentation of the pentose substrate. Both reactions occur simultaneously and in competition at the same active site. Although the small subunit is not catalytic it is essential for maximal activity. The chain is Ribulose bisphosphate carboxylase small subunit, chloroplastic from Malus sp. (Crab apple).